The chain runs to 149 residues: Large ribosomal subunit protein uL24 (149 aa).

It belongs to the universal ribosomal protein uL24 family. Part of the 50S ribosomal subunit.

One of two assembly initiator proteins, it binds directly to the 5'-end of the 23S rRNA, where it nucleates assembly of the 50S subunit. Functionally, located at the polypeptide exit tunnel on the outside of the subunit. The polypeptide is Large ribosomal subunit protein uL24 (Hyperthermus butylicus (strain DSM 5456 / JCM 9403 / PLM1-5)).